Reading from the N-terminus, the 169-residue chain is Phosphopantetheine adenylyltransferase (169 aa).

T13 contributes to the substrate binding site. ATP is bound by residues 13–14 and H21; that span reads TF. The substrate site is built by K45, L82, and R96. Residues 97–99, E107, and 132–138 contribute to the ATP site; these read GLR and HQFISSR.

It belongs to the bacterial CoaD family. In terms of assembly, homohexamer. Mg(2+) serves as cofactor.

The protein resides in the cytoplasm. The enzyme catalyses (R)-4'-phosphopantetheine + ATP + H(+) = 3'-dephospho-CoA + diphosphate. It participates in cofactor biosynthesis; coenzyme A biosynthesis; CoA from (R)-pantothenate: step 4/5. In terms of biological role, reversibly transfers an adenylyl group from ATP to 4'-phosphopantetheine, yielding dephospho-CoA (dPCoA) and pyrophosphate. The sequence is that of Phosphopantetheine adenylyltransferase from Acidiphilium cryptum (strain JF-5).